Reading from the N-terminus, the 263-residue chain is UPF0739 protein C1orf74 homolog (263 aa).

This sequence belongs to the UPF0739 family.

This is UPF0739 protein C1orf74 homolog from Rattus norvegicus (Rat).